We begin with the raw amino-acid sequence, 109 residues long: Thioredoxin (109 aa).

Residues 2–107 form the Thioredoxin domain; sequence SISQVIDTSF…LLNTLQKHLK (106 aa). Residues cysteine 31 and cysteine 34 each act as nucleophile in the active site. A disulfide bridge links cysteine 31 with cysteine 34.

It belongs to the thioredoxin family.

The protein resides in the plastid. It is found in the chloroplast. Its function is as follows. Participates in various redox reactions through the reversible oxidation of its active center dithiol to a disulfide and catalyzes dithiol-disulfide exchange reactions. The chain is Thioredoxin (trxA) from Griffithsia pacifica (Red alga).